We begin with the raw amino-acid sequence, 469 residues long: Ribulose bisphosphate carboxylase large chain (469 aa).

Substrate is bound by residues N115 and T165. Catalysis depends on K167, which acts as the Proton acceptor. Residue K169 participates in substrate binding. K193, D195, and E196 together coordinate Mg(2+). The residue at position 193 (K193) is an N6-carboxylysine. H286 functions as the Proton acceptor in the catalytic mechanism. Substrate is bound by residues R287, H319, and S371.

This sequence belongs to the RuBisCO large chain family. Type I subfamily. As to quaternary structure, heterohexadecamer of 8 large chains and 8 small chains. The cofactor is Mg(2+).

The protein localises to the plastid. The protein resides in the organellar chromatophore. The catalysed reaction is 2 (2R)-3-phosphoglycerate + 2 H(+) = D-ribulose 1,5-bisphosphate + CO2 + H2O. The enzyme catalyses D-ribulose 1,5-bisphosphate + O2 = 2-phosphoglycolate + (2R)-3-phosphoglycerate + 2 H(+). Its function is as follows. RuBisCO catalyzes two reactions: the carboxylation of D-ribulose 1,5-bisphosphate, the primary event in carbon dioxide fixation, as well as the oxidative fragmentation of the pentose substrate. Both reactions occur simultaneously and in competition at the same active site. The polypeptide is Ribulose bisphosphate carboxylase large chain (Paulinella chromatophora).